Consider the following 368-residue polypeptide: GLABROUS1 enhancer-binding protein-like (368 aa).

The tract at residues 1 to 123 is disordered; that stretch reads MAPKKAEEVV…TSDTEHVKKP (123 aa). The span at 17-31 shows a compositional bias: acidic residues; sequence SEEEESGSSGEESES. Residues 35-47 show a composition bias toward basic and acidic residues; sequence VPKKVESSQKPES. Residues 84 to 97 show a composition bias toward polar residues; that stretch reads TSGSAATVPESSTA. The span at 100 to 123 shows a compositional bias: basic and acidic residues; that stretch reads PLKEAAPEAIKKQKTSDTEHVKKP.

The protein belongs to the GeBP family. In terms of assembly, mono-, di- and oligomers. Associated with the Mediator complex. Interacts with MED6. Interacts with MED10A, MED28 and MED32. Interacts with DEK3.

It is found in the nucleus. Its function is as follows. Transcription factor that binds promoters containing the CryR2 element, 5'-ACATAWCT-3'. The DNA-binding activity is decreased upon direct physical interaction with the mediator subunits and is modulated by redox conditions. The oxidized protein is the preferential binding form. This Arabidopsis thaliana (Mouse-ear cress) protein is GLABROUS1 enhancer-binding protein-like.